We begin with the raw amino-acid sequence, 411 residues long: Arginine deiminase (411 aa).

Residue cysteine 401 is the Amidino-cysteine intermediate of the active site.

It belongs to the arginine deiminase family.

Its subcellular location is the cytoplasm. It catalyses the reaction L-arginine + H2O = L-citrulline + NH4(+). Its pathway is amino-acid degradation; L-arginine degradation via ADI pathway; carbamoyl phosphate from L-arginine: step 1/2. The chain is Arginine deiminase from Staphylococcus epidermidis (strain ATCC 35984 / DSM 28319 / BCRC 17069 / CCUG 31568 / BM 3577 / RP62A).